A 130-amino-acid chain; its full sequence is Small ribosomal subunit protein uS11 (130 aa).

Residues 1–21 (MAPQSKRSGGRKQKKHVPNGV) form a disordered region. Residues 8–17 (SGGRKQKKHV) are compositionally biased toward basic residues.

The protein belongs to the universal ribosomal protein uS11 family. In terms of assembly, part of the 30S ribosomal subunit. Interacts with proteins S7 and S18. Binds to IF-3.

In terms of biological role, located on the platform of the 30S subunit, it bridges several disparate RNA helices of the 16S rRNA. Forms part of the Shine-Dalgarno cleft in the 70S ribosome. The protein is Small ribosomal subunit protein uS11 of Acaryochloris marina (strain MBIC 11017).